We begin with the raw amino-acid sequence, 681 residues long: PAB-dependent poly(A)-specific ribonuclease subunit pan3-like (681 aa).

The segment at 9-38 (FSTNIPCRNEQLYGRCPYIDKGCFFQHKNQ) adopts a C3H1-type zinc-finger fold. Disordered stretches follow at residues 38 to 58 (QDNA…PQNS) and 82 to 123 (SSAS…TVSL). Residues 41 to 50 (APASSKPPSA) are compositionally biased toward low complexity. Polar residues predominate over residues 96 to 106 (KSYSSALSSGK). At Ser-165 the chain carries Phosphoserine.

Belongs to the protein kinase superfamily. PAN3 family.

It localises to the cytoplasm. Its function is as follows. Regulatory subunit of the poly(A)-nuclease (PAN) deadenylation complex. In Schizosaccharomyces pombe (strain 972 / ATCC 24843) (Fission yeast), this protein is PAB-dependent poly(A)-specific ribonuclease subunit pan3-like.